The primary structure comprises 90 residues: Bombyxin B-5 (90 aa).

Residues 1–20 form the signal peptide; the sequence is MMKTAVMFILVVVISLTYSS. 3 disulfide bridges follow: Cys30-Cys75, Cys42-Cys88, and Cys74-Cys79. A propeptide spans 49–64 (c peptide like); it reads GGAQYAPYWQETYLRS.

The protein belongs to the insulin family. In terms of assembly, heterodimer of a B chain and an A chain linked by two disulfide bonds.

Its subcellular location is the secreted. Functionally, brain peptide responsible for activation of prothoracic glands to produce ecdysone in insects. The chain is Bombyxin B-5 (BBXB5) from Bombyx mori (Silk moth).